A 351-amino-acid chain; its full sequence is MNPPKSAPDAQGLSYRDAGVDIDAGDALVDKIKPFAKKTLRDGVLGGIGGFGALFEVPKKYREPVLVSGTDGVGTKLKLAFHLNKHDTVGQDLVAMSVNDILVQGAEPLFFLDYFACGKLDVETAATVVKGIATGCELAGCALIGGETAEMPGMYPDGEYDLAGFAVGAVEKSKIIDGSTIAEGDVVLGLASSGIHSNGFSLVRKIIERANPDLSADFHGRSLADALMAPTRIYVKPLLALMEKIAVKGMAHITGGGLVENIPRVLRDGLTAELDQHAWPLPPLFQWLQQHGGVADAEMHRVFNCGIGMAVIVSAADADDALRQLADAGEQVWKIGTVRASREGEAQTVVV.

Belongs to the AIR synthase family.

It is found in the cytoplasm. It catalyses the reaction 2-formamido-N(1)-(5-O-phospho-beta-D-ribosyl)acetamidine + ATP = 5-amino-1-(5-phospho-beta-D-ribosyl)imidazole + ADP + phosphate + H(+). It functions in the pathway purine metabolism; IMP biosynthesis via de novo pathway; 5-amino-1-(5-phospho-D-ribosyl)imidazole from N(2)-formyl-N(1)-(5-phospho-D-ribosyl)glycinamide: step 2/2. The chain is Phosphoribosylformylglycinamidine cyclo-ligase from Burkholderia mallei (strain NCTC 10247).